A 320-amino-acid polypeptide reads, in one-letter code: Glutathione synthetase (320 aa).

In terms of domain architecture, ATP-grasp spans 133–317 (KMYTLQFAAV…LGEKVICWLE (185 aa)). 159–215 (LEEHGAAVLKPLGGKAGEGILFLDPGDRNFNSLVEISTQHGKEPVMVQRFLPEAKEG) contributes to the ATP binding site. Residues Glu288 and Asn290 each coordinate Mg(2+).

Belongs to the prokaryotic GSH synthase family. Requires Mg(2+) as cofactor. It depends on Mn(2+) as a cofactor.

The enzyme catalyses gamma-L-glutamyl-L-cysteine + glycine + ATP = glutathione + ADP + phosphate + H(+). It participates in sulfur metabolism; glutathione biosynthesis; glutathione from L-cysteine and L-glutamate: step 2/2. In Synechocystis sp. (strain ATCC 27184 / PCC 6803 / Kazusa), this protein is Glutathione synthetase.